A 165-amino-acid chain; its full sequence is Basic transcription factor 3 (165 aa).

The NAC-A/B domain occupies 33-97; sequence TTDDKRLQST…PQTKKLQDIL (65 aa). Residues 120–134 are compositionally biased toward polar residues; that stretch reads QKQASGEGNAASATI. The disordered stretch occupies residues 120–144; it reads QKQASGEGNAASATIQEEDDDDVPE.

The protein belongs to the NAC-beta family. As to quaternary structure, part of the nascent polypeptide-associated complex (NAC). Interacts with EIF(ISO)4E.

The sequence is that of Basic transcription factor 3 from Arabidopsis thaliana (Mouse-ear cress).